Reading from the N-terminus, the 273-residue chain is HTH-type transcriptional activator RhaS (273 aa).

Residues 174–272 (YQLLDWLQNN…SQSPRDLRSQ (99 aa)) enclose the HTH araC/xylS-type domain. 2 consecutive DNA-binding regions (H-T-H motif) follow at residues 191–212 (PELA…KNKT) and 239–262 (VTDI…KREF).

Binds DNA as a dimer.

It is found in the cytoplasm. Functionally, activates expression of the rhaBAD and rhaT operons. In Yersinia pestis bv. Antiqua (strain Angola), this protein is HTH-type transcriptional activator RhaS.